The chain runs to 338 residues: GTPase Obg (338 aa).

The region spanning 1–159 (MKFVDSASVF…FTLDLELKLM (159 aa)) is the Obg domain. A disordered region spans residues 123–145 (GGRGNQHFATSTHQAPRHAEPGQ). Residues 160-323 (ADVGLVGFPN…LKDALWRIIV (164 aa)) enclose the OBG-type G domain. GTP is bound by residues 166–173 (GFPNAGKS), 191–195 (FTTLV), 213–216 (DIPG), 280–283 (TKMD), and 304–306 (SAV). Residues Ser-173 and Thr-193 each coordinate Mg(2+).

It belongs to the TRAFAC class OBG-HflX-like GTPase superfamily. OBG GTPase family. Monomer. Mg(2+) serves as cofactor.

It is found in the cytoplasm. Its function is as follows. An essential GTPase which binds GTP, GDP and possibly (p)ppGpp with moderate affinity, with high nucleotide exchange rates and a fairly low GTP hydrolysis rate. Plays a role in control of the cell cycle, stress response, ribosome biogenesis and in those bacteria that undergo differentiation, in morphogenesis control. In Chlorobium chlorochromatii (strain CaD3), this protein is GTPase Obg.